A 262-amino-acid polypeptide reads, in one-letter code: Acyl-[acyl-carrier-protein]--UDP-N-acetylglucosamine O-acyltransferase (262 aa).

It belongs to the transferase hexapeptide repeat family. LpxA subfamily. Homotrimer.

It localises to the cytoplasm. It carries out the reaction a (3R)-hydroxyacyl-[ACP] + UDP-N-acetyl-alpha-D-glucosamine = a UDP-3-O-[(3R)-3-hydroxyacyl]-N-acetyl-alpha-D-glucosamine + holo-[ACP]. It functions in the pathway glycolipid biosynthesis; lipid IV(A) biosynthesis; lipid IV(A) from (3R)-3-hydroxytetradecanoyl-[acyl-carrier-protein] and UDP-N-acetyl-alpha-D-glucosamine: step 1/6. In terms of biological role, involved in the biosynthesis of lipid A, a phosphorylated glycolipid that anchors the lipopolysaccharide to the outer membrane of the cell. The protein is Acyl-[acyl-carrier-protein]--UDP-N-acetylglucosamine O-acyltransferase of Burkholderia ambifaria (strain ATCC BAA-244 / DSM 16087 / CCUG 44356 / LMG 19182 / AMMD) (Burkholderia cepacia (strain AMMD)).